A 78-amino-acid chain; its full sequence is Large ribosomal subunit protein bL28 (78 aa).

Belongs to the bacterial ribosomal protein bL28 family.

The chain is Large ribosomal subunit protein bL28 from Haemophilus influenzae (strain 86-028NP).